The following is a 264-amino-acid chain: Thymidylate synthase (264 aa).

Arg-21 serves as a coordination point for dUMP. His-51 contacts (6R)-5,10-methylene-5,6,7,8-tetrahydrofolate. 126-127 (RR) serves as a coordination point for dUMP. The active-site Nucleophile is the Cys-146. DUMP is bound by residues 166–169 (RSCD), Asn-177, and 207–209 (HLY). Asp-169 is a (6R)-5,10-methylene-5,6,7,8-tetrahydrofolate binding site. Residue Ala-263 participates in (6R)-5,10-methylene-5,6,7,8-tetrahydrofolate binding.

This sequence belongs to the thymidylate synthase family. Bacterial-type ThyA subfamily. In terms of assembly, homodimer.

It is found in the cytoplasm. The catalysed reaction is dUMP + (6R)-5,10-methylene-5,6,7,8-tetrahydrofolate = 7,8-dihydrofolate + dTMP. The protein operates within pyrimidine metabolism; dTTP biosynthesis. Functionally, catalyzes the reductive methylation of 2'-deoxyuridine-5'-monophosphate (dUMP) to 2'-deoxythymidine-5'-monophosphate (dTMP) while utilizing 5,10-methylenetetrahydrofolate (mTHF) as the methyl donor and reductant in the reaction, yielding dihydrofolate (DHF) as a by-product. This enzymatic reaction provides an intracellular de novo source of dTMP, an essential precursor for DNA biosynthesis. In Enterobacter sp. (strain 638), this protein is Thymidylate synthase.